A 551-amino-acid polypeptide reads, in one-letter code: MNNTIINSLIGGDDSIKRSNVFAVDSQIPTLYMPQYISLSGVMTNNGPDNQTIASFEIRDQYITALNHLVLSLELPEVKGMGRFGYVPYVGYKCINHVSVSSCNGVIWEIEGEELYNNCINNTIALKHSGYSSELNDISIGLTPNDTIKEPSTVYVYIKTPFDVEDTFSSLKLSDSKITVTVTFNPVSDIVIRDSSFDFETFNKEFVYVPELSFIGYMVKNVQIKPSFIEKPRRVIGQINQPTATVTEVHAATSLSVYTKPYYGNTDNKFISYPGYSQDEKDYIDAYVSRLLDDLVIVSDGPPTGYPESAEIVEVPEDGIVSIQDADVYVKIDNVPDNMSVYLHTNLLMFGTRKNSFIYNISKKFSAITGTYSDATKRTVFAHISHSINIIDTSIPVSLWTSQRNVYNGDNRSAESKAKDLFINDPFIKGIDFKNKTDIISRLEVRFGNDVLYSENGPISRIYNELLTKSNNGTRTLTFNFTPKIFFRPTTITANVSRGKDKLSVRVVYSTMDVNHPIYYVQKQLVVVCNDLYKVSYDQGVSITKIMGDNN.

It belongs to the orthopoxvirus protein OPG125 family. Homotrimer. Self-assembles to form a layer. Interacts with OPG158 (via N-terminus); this interaction is necessary for OPG125 association with membranes.

It localises to the membrane. Functionally, scaffold protein which forms a transitory spherical honeycomb lattice providing curvature and rigidity to the convex membrane of crescent and immature virions (IV). This association occurs concomitantly with viral membrane formation. Targeted by the drug rifampicin, which prevents the formation of this lattice, and hence virus morphogenesis. In the presence of rifampicin, irregularly shaped membranes that lack the honeycomb layer accumulate around areas of electron-dense viroplasm. This layer is lost from virions during maturation from IV to mature virion (MV), through the proteolysis of OPG158 N-terminus. This Homo sapiens (Human) protein is Scaffold protein OPG125 (OPG125).